The following is a 381-amino-acid chain: Putative 2-heptyl-3-hydroxy-4(1H)-quinolone synthase AqdB1 (381 aa).

It belongs to the 3-hydroxybenzoate 6-hydroxylase family.

It catalyses the reaction 2-heptyl-4(1H)-quinolone + NADH + O2 + H(+) = 2-heptyl-3-hydroxy-4(1H)-quinolone + NAD(+) + H2O. Functionally, could be involved in the degradation of the Pseudomonas aeruginosa quorum sensing signal molecule HHQ (2-heptyl-4-quinolone) to anthranilic acid. May catalyze the hydroxylation of HHQ to PQS (2-heptyl-3-hydroxy-4-quinolone). The protein is Putative 2-heptyl-3-hydroxy-4(1H)-quinolone synthase AqdB1 of Rhodococcus erythropolis (Arthrobacter picolinophilus).